A 229-amino-acid polypeptide reads, in one-letter code: Transcriptional regulatory protein CreB (229 aa).

The region spanning 5 to 119 is the Response regulatory domain; sequence TVWLVEDEQG…EVCARVRTLL (115 aa). Asp54 bears the 4-aspartylphosphate mark. Positions 129 to 228 form a DNA-binding region, ompR/PhoB-type; sequence SPVIRIGHFE…HRGMGYSLRG (100 aa).

Phosphorylated by CreC.

The protein resides in the cytoplasm. In terms of biological role, member of the two-component regulatory system CreC/CreB involved in catabolic regulation. In Escherichia coli (strain K12), this protein is Transcriptional regulatory protein CreB (creB).